A 241-amino-acid polypeptide reads, in one-letter code: Triosephosphate isomerase (241 aa).

9 to 11 lines the substrate pocket; sequence NWK. The active-site Electrophile is the histidine 96. The active-site Proton acceptor is the glutamate 165. Residues glycine 171, serine 204, and 225–226 each bind substrate; that span reads GG.

It belongs to the triosephosphate isomerase family. As to quaternary structure, homodimer.

The protein resides in the cytoplasm. It carries out the reaction D-glyceraldehyde 3-phosphate = dihydroxyacetone phosphate. It functions in the pathway carbohydrate biosynthesis; gluconeogenesis. The protein operates within carbohydrate degradation; glycolysis; D-glyceraldehyde 3-phosphate from glycerone phosphate: step 1/1. Functionally, involved in the gluconeogenesis. Catalyzes stereospecifically the conversion of dihydroxyacetone phosphate (DHAP) to D-glyceraldehyde-3-phosphate (G3P). In Trichormus variabilis (strain ATCC 29413 / PCC 7937) (Anabaena variabilis), this protein is Triosephosphate isomerase.